We begin with the raw amino-acid sequence, 336 residues long: Retinol dehydrogenase 10-B (336 aa).

Residues 7–27 traverse the membrane as a helical; Signal-anchor segment; that stretch reads LFVVTFKIIWSFVLAGAKWFI. Position 40–64 (40–64) interacts with NADP(+); that stretch reads VITGAGSGLGRLFALEFARRRATLV. Residue Ser192 coordinates substrate. The Proton acceptor role is filled by Tyr205.

It belongs to the short-chain dehydrogenases/reductases (SDR) family.

It localises to the microsome membrane. Its subcellular location is the endoplasmic reticulum membrane. It carries out the reaction all-trans-retinol + NADP(+) = all-trans-retinal + NADPH + H(+). It functions in the pathway cofactor metabolism; retinol metabolism. Retinol dehydrogenase with a clear preference for NADP. Converts all-trans-retinol to all-trans-retinal. Has no detectable activity towards 11-cis-retinol, 9-cis-retinol and 13-cis-retinol. The sequence is that of Retinol dehydrogenase 10-B (rdh10b) from Danio rerio (Zebrafish).